The following is a 171-amino-acid chain: uncharacterized protein (171 aa).

This is an uncharacterized protein from Haemophilus influenzae (strain ATCC 51907 / DSM 11121 / KW20 / Rd).